The primary structure comprises 273 residues: Putative pyruvate, phosphate dikinase regulatory protein (273 aa).

Residue 153–160 (GISRTSKT) coordinates ADP.

Belongs to the pyruvate, phosphate/water dikinase regulatory protein family. PDRP subfamily.

It catalyses the reaction N(tele)-phospho-L-histidyl/L-threonyl-[pyruvate, phosphate dikinase] + ADP = N(tele)-phospho-L-histidyl/O-phospho-L-threonyl-[pyruvate, phosphate dikinase] + AMP + H(+). The enzyme catalyses N(tele)-phospho-L-histidyl/O-phospho-L-threonyl-[pyruvate, phosphate dikinase] + phosphate + H(+) = N(tele)-phospho-L-histidyl/L-threonyl-[pyruvate, phosphate dikinase] + diphosphate. Its function is as follows. Bifunctional serine/threonine kinase and phosphorylase involved in the regulation of the pyruvate, phosphate dikinase (PPDK) by catalyzing its phosphorylation/dephosphorylation. The sequence is that of Putative pyruvate, phosphate dikinase regulatory protein from Rhizobium etli (strain CIAT 652).